Reading from the N-terminus, the 252-residue chain is 3-deoxy-manno-octulosonate cytidylyltransferase (252 aa).

This sequence belongs to the KdsB family.

The protein localises to the cytoplasm. The catalysed reaction is 3-deoxy-alpha-D-manno-oct-2-ulosonate + CTP = CMP-3-deoxy-beta-D-manno-octulosonate + diphosphate. It functions in the pathway nucleotide-sugar biosynthesis; CMP-3-deoxy-D-manno-octulosonate biosynthesis; CMP-3-deoxy-D-manno-octulosonate from 3-deoxy-D-manno-octulosonate and CTP: step 1/1. It participates in bacterial outer membrane biogenesis; lipopolysaccharide biosynthesis. In terms of biological role, activates KDO (a required 8-carbon sugar) for incorporation into bacterial lipopolysaccharide in Gram-negative bacteria. This is 3-deoxy-manno-octulosonate cytidylyltransferase from Solibacter usitatus (strain Ellin6076).